A 185-amino-acid polypeptide reads, in one-letter code: Ribosome-recycling factor (185 aa).

Belongs to the RRF family.

The protein localises to the cytoplasm. Responsible for the release of ribosomes from messenger RNA at the termination of protein biosynthesis. May increase the efficiency of translation by recycling ribosomes from one round of translation to another. In Citrifermentans bemidjiense (strain ATCC BAA-1014 / DSM 16622 / JCM 12645 / Bem) (Geobacter bemidjiensis), this protein is Ribosome-recycling factor.